The sequence spans 217 residues: CXXC-type zinc finger protein 4 (217 aa).

Residues 1–20 (MHRNDSQRLGKPGGAPESLQ) are disordered. Residues 122 to 163 (AKKKRKRCGVCVPCKRLINCGVCSSCRNRKTGHQICKFRKCE) form a CXXC-type zinc finger. Residues C129, C132, C135, C141, C144, C147, C157, and C162 each coordinate Zn(2+).

The protein resides in the cytoplasm. Its function is as follows. Acts as a negative regulator of the Wnt signaling pathway required for anterior neural structure formation. Ectopic expression induces ventralization. Binds preferentially to DNA containing cytidine-phosphate-guanosine (CpG) dinucleotides over CpH (H=A, T, and C), hemimethylated-CpG and hemimethylated-hydroxymethyl-CpG. In Xenopus laevis (African clawed frog), this protein is CXXC-type zinc finger protein 4 (cxxc4).